A 309-amino-acid chain; its full sequence is Tagatose-6-phosphate kinase (309 aa).

Belongs to the carbohydrate kinase PfkB family. LacC subfamily.

The enzyme catalyses D-tagatofuranose 6-phosphate + ATP = D-tagatofuranose 1,6-bisphosphate + ADP + H(+). It functions in the pathway carbohydrate metabolism; D-tagatose 6-phosphate degradation; D-glyceraldehyde 3-phosphate and glycerone phosphate from D-tagatose 6-phosphate: step 1/2. In Streptococcus pyogenes serotype M18 (strain MGAS8232), this protein is Tagatose-6-phosphate kinase.